A 770-amino-acid polypeptide reads, in one-letter code: Amyloid-beta precursor protein (770 aa).

Positions 1–17 are cleaved as a signal peptide; the sequence is MLPSLALLLLAAWTVRA. Over 18-701 the chain is Extracellular; that stretch reads LEVPTDGNAG…AEDVGSNKGA (684 aa). The tract at residues 28–123 is GFLD subdomain; the sequence is LLAEPQIAMF…PYRCLVGEFV (96 aa). The E1 domain occupies 28 to 189; the sequence is LLAEPQIAMF…RGVEFVCCPL (162 aa). 6 cysteine pairs are disulfide-bonded: Cys38-Cys62, Cys73-Cys117, Cys98-Cys105, Cys133-Cys187, Cys144-Cys174, and Cys158-Cys186. 96–110 provides a ligand contact to heparin; that stretch reads NWCKRGRKQCKTHTH. The cuBD subdomain stretch occupies residues 131–189; it reads DKCKFLHQERMDVCETHLHWHTVAKETCSEKSTNLHDYGMLLPCGIDKFRGVEFVCCPL. The tract at residues 135–155 is copper-binding; that stretch reads FLHQERMDVCETHLHWHTVAK. Cu(2+) is bound by residues His147, His151, and Tyr168. The segment at 181–188 is zinc-binding; sequence GVEFVCCP. Positions 183, 186, and 187 each coordinate Zn(2+). Positions 196-207 are enriched in acidic residues; sequence IDSADAEEDDSD. The interval 196–283 is disordered; the sequence is IDSADAEEDD…TTTTTTTESV (88 aa). Ser198 bears the Phosphoserine; by CK2 mark. A Phosphoserine; by CK1 modification is found at Ser206. Residues Tyr217 and Tyr262 each carry the sulfotyrosine modification. Positions 228 to 264 are enriched in acidic residues; sequence VAEEEEVADVEEEEAEDDEDVEDGDEVEEEAEEPYEE. Low complexity predominate over residues 268–281; sequence RTTSIATTTTTTTE. Disulfide bonds link Cys291/Cys341, Cys300/Cys324, and Cys316/Cys337. The 51-residue stretch at 291–341 folds into the BPTI/Kunitz inhibitor domain; that stretch reads CSEQAETGPCRAMISRWYFDVTEGKCAPFFYGGCGGNRNNFDTEEYCMAVC. Tyr336 is subject to Sulfotyrosine. An OX-2 motif is present at residues 344–365; sequence VSSQSLLKTTSEPLPQDPVKLP. The region spanning 374–565 is the E2 domain; it reads AVDKYLETPG…EEIQDEVDEL (192 aa). Residues 391-423 form a heparin-binding region; the sequence is FQKAKERLEAKHRERMSQVMREWEEAERQAKNL. The residue at position 441 (Ser441) is a Phosphoserine. A heparin-binding region spans residues 491–522; it reads FNMLKKYVRAEQKDRQHTLKHFEHVRMVDPKK. Tyr497 carries the post-translational modification Phosphotyrosine. The collagen-binding stretch occupies residues 523–540; the sequence is AAQIRSQVMTHLRVIYER. Asn542 and Asn571 each carry an N-linked (GlcNAc...) asparagine glycan. A glycan (O-linked (Xyl...) (chondroitin sulfate) serine; in L-APP isoforms) is linked at Ser656. 2 residues coordinate Cu(2+): His677 and His685. 2 residues coordinate Zn(2+): His677 and His685. An interaction with PSEN1 region spans residues 695 to 722; that stretch reads VGSNKGAIIGLMVGGVVIATVIVITLVM. A helical membrane pass occupies residues 702 to 722; it reads IIGLMVGGVVIATVIVITLVM. Residues 723–770 are Cytoplasmic-facing; that stretch reads LKKKQYTSIHHGVVEVDAAVTPEERHLSKMQQNGYENPTYKFFEQMQN. The short motif at 724-734 is the Basolateral sorting signal element; it reads KKKQYTSIHHG. Thr729 carries the post-translational modification Phosphothreonine. Ser730 carries the post-translational modification Phosphoserine; by APP-kinase I. The segment at 732-751 is interaction with G(o)-alpha; it reads HHGVVEVDAAVTPEERHLSK. Thr743 carries the post-translational modification Phosphothreonine; by CDK5 and MAPK10. A required for the interaction with KIF5B and for anterograde transport in axons region spans residues 756–770; it reads GYENPTYKFFEQMQN. Phosphotyrosine; by ABL1 is present on Tyr757. Positions 757–762 match the YENPXY motif; contains endocytosis signal motif; the sequence is YENPTY. Residue Lys763 forms a Glycyl lysine isopeptide (Lys-Gly) (interchain with G-Cter in ubiquitin) linkage.

This sequence belongs to the APP family. In terms of assembly, binds, via its C-terminus, to the PID domain of several cytoplasmic proteins, including APBB family members, the APBA family, MAPK8IP1, SHC1 and NUMB and DAB1. Binding to DAB1 inhibits its serine phosphorylation. Interacts (via NPXY motif) with DAB2 (via PID domain); the interaction is impaired by tyrosine phosphorylation of the NPXY motif. Also interacts with GPCR-like protein BPP, APPBP1, IB1, KNS2 (via its TPR domains), APPBP2 (via BaSS) and DDB1. In vitro, it binds MAPT via the MT-binding domains. Associates with microtubules in the presence of ATP and in a kinesin-dependent manner. Interacts, through a C-terminal domain, with GNAO1. Amyloid-beta protein 42 binds CHRNA7 in hippocampal neurons. Amyloid-beta associates with HADH2. Interacts with CPEB1, ANKS1B and AGER. Interacts with ITM2B. Interacts with ITM2C. Interacts with IDE. Can form homodimers; dimerization is enhanced in the presence of Cu(2+) ions. Can form homodimers; this is promoted by heparin binding. Amyloid-beta protein 40 interacts with S100A9. CTF-alpha product of APP interacts with GSAP. Isoform APP695 interacts with SORL1 (via N-terminal ectodomain); this interaction retains APP in the trans-Golgi network and reduces processing into soluble APP-alpha and amyloid-beta peptides. The C99 fragment also interacts with SORL1. Isoform APP751 interacts with SORL1. Isoform APP770 interacts with SORL1. Interacts with PLD3. Interacts with VDAC1. Interacts with NSG1; could regulate APP processing. Amyloid-beta protein 42 interacts with FPR2. Interacts with SYT7. Interacts (via transmembrane region) with PSEN1; the interaction is direct. Interacts with LRRK2. Interacts (via cytoplasmic domain) with KIF5B. Interacts (via C-terminus) with APBB2/FE65L1 (via C-terminus). Interacts (via intracellular domain) with APBB3. Post-translationally, proteolytically processed under normal cellular conditions. Cleavage either by alpha-secretase, beta-secretase or theta-secretase leads to generation and extracellular release of soluble APP peptides, S-APP-alpha and S-APP-beta, and the retention of corresponding membrane-anchored C-terminal fragments, C80, C83 and C99. Subsequent processing of C80 and C83 by gamma-secretase yields P3 peptides. This is the major secretory pathway and is non-amyloidogenic. Alternatively, presenilin/nicastrin-mediated gamma-secretase processing of C99 releases the amyloid-beta proteins, amyloid-beta protein 40 and amyloid-beta protein 42, major components of amyloid plaques, and the cytotoxic C-terminal fragments, gamma-CTF(50), gamma-CTF(57) and gamma-CTF(59). PSEN1 cleavage is more efficient with C83 than with C99 as substrate (in vitro). Amyloid-beta protein 40 and Amyloid-beta protein 42 are cleaved by ACE. Many other minor amyloid-beta peptides, amyloid-beta 1-X peptides, are found in cerebral spinal fluid (CSF) including the amyloid-beta X-15 peptides, produced from the cleavage by alpha-secretase. In terms of processing, proteolytically cleaved by caspases during neuronal apoptosis. Cleavage at Asp-739 by either caspase-3, -8 or -9 results in the production of the neurotoxic C31 peptide and the increased production of amyloid-beta peptides. N-glycosylated. Post-translationally, O-glycosylated. O-linkage of chondroitin sulfate to the L-APP isoforms produces the APP proteoglycan core proteins, the appicans. The chondroitin sulfate chain of appicans contains 4-O-sulfated galactose in the linkage region and chondroitin sulfate E in the repeated disaccharide region. In terms of processing, phosphorylation in the C-terminal on tyrosine, threonine and serine residues is neuron-specific. Phosphorylation can affect APP processing, neuronal differentiation and interaction with other proteins. Phosphorylated on Thr-743 in neuronal cells by Cdc5 kinase and Mapk10, in dividing cells by Cdc2 kinase in a cell-cycle dependent manner with maximal levels at the G2/M phase and, in vitro, by GSK-3-beta. The Thr-743 phosphorylated form causes a conformational change which reduces binding of Fe65 family members. In dopaminergic (DA) neurons, phosphorylation on Thr-743 by LRKK2 promotes the production and the nuclear translocation of the APP intracellular domain (AICD) which induces DA neuron apoptosis. Phosphorylation on Tyr-757 is required for SHC binding. Phosphorylated in the extracellular domain by casein kinases on both soluble and membrane-bound APP. This phosphorylation is inhibited by heparin. Extracellular binding and reduction of copper, results in a corresponding oxidation of Cys-144 and Cys-158, and the formation of a disulfide bond. Post-translationally, trophic-factor deprivation triggers the cleavage of surface APP by beta-secretase to release sAPP-beta which is further cleaved to release an N-terminal fragment of APP (N-APP). In terms of processing, amyloid-beta peptides are degraded by IDE. Sulfated on tyrosine residues. Expressed in the brain. In the brain, non-L-APP isoforms are expressed in neurons, isoform APP695 being the predominant form. In astrocytes and microglial cells, almost 50% is L-isoform (appican).

Its subcellular location is the cell membrane. The protein resides in the membrane. It is found in the perikaryon. It localises to the cell projection. The protein localises to the growth cone. Its subcellular location is the clathrin-coated pit. The protein resides in the early endosome. It is found in the cytoplasmic vesicle. It localises to the endoplasmic reticulum. The protein localises to the golgi apparatus. Its subcellular location is the cell surface. The protein resides in the nucleus. It is found in the cytoplasm. It localises to the secreted. In terms of biological role, functions as a cell surface receptor and performs physiological functions on the surface of neurons relevant to neurite growth, neuronal adhesion and axonogenesis. Interaction between APP molecules on neighboring cells promotes synaptogenesis. Involved in cell mobility and transcription regulation through protein-protein interactions. Can promote transcription activation through binding to APBB1-KAT5 and inhibit Notch signaling through interaction with Numb. Couples to apoptosis-inducing pathways such as those mediated by G(o) and JIP. Inhibits G(o)-alpha ATPase activity. Acts as a kinesin I membrane receptor, mediating the axonal transport of beta-secretase and presenilin 1. By acting as a kinesin I membrane receptor, plays a role in axonal anterograde transport of cargo towards synapses in axons. May be involved in copper homeostasis/oxidative stress through copper ion reduction. Can regulate neurite outgrowth through binding to components of the extracellular matrix such as heparin and collagen I and IV. The splice isoforms that contain the BPTI domain possess protease inhibitor activity. Induces a AGER-dependent pathway that involves activation of p38 MAPK, resulting in internalization of amyloid-beta peptide and leading to mitochondrial dysfunction in cultured mitochondrial dysfunction in cultured cortical neurons. Provides Cu(2+) ions for GPC1 which are required for release of nitric oxide (NO) and subsequent degradation of the heparan sulfate chains on GPC1. Functionally, amyloid-beta peptides are lipophilic metal chelators with metal-reducing activity. Binds transient metals such as copper, zinc and iron. Rat and mouse amyloid-beta peptides bind only weakly transient metals and have little reducing activity due to substitutions of transient metal chelating residues. Amyloid-beta protein 42 may activate mononuclear phagocytes in the brain and elicits inflammatory responses. Promotes both tau aggregation and TPK II-mediated phosphorylation. Also binds GPC1 in lipid rafts. Its function is as follows. Appicans elicit adhesion of neural cells to the extracellular matrix and may regulate neurite outgrowth in the brain. The gamma-CTF peptides as well as the caspase-cleaved peptides, including C31, are potent enhancers of neuronal apoptosis. The polypeptide is Amyloid-beta precursor protein (Rattus norvegicus (Rat)).